Consider the following 101-residue polypeptide: Integration host factor subunit beta (101 aa).

The tract at residues 58-101 (ARAGRNPRTGAHVPVDQKSVPFFKTGKEMRERLNRDTGAPDSGA) is disordered. Residues 82–92 (TGKEMRERLNR) are compositionally biased toward basic and acidic residues.

It belongs to the bacterial histone-like protein family. Heterodimer of an alpha and a beta chain.

Its function is as follows. This protein is one of the two subunits of integration host factor, a specific DNA-binding protein that functions in genetic recombination as well as in transcriptional and translational control. The sequence is that of Integration host factor subunit beta from Rhodopseudomonas palustris (strain BisB18).